Reading from the N-terminus, the 150-residue chain is Large ribosomal subunit protein bL9 (150 aa).

The protein belongs to the bacterial ribosomal protein bL9 family.

Binds to the 23S rRNA. The protein is Large ribosomal subunit protein bL9 of Neisseria meningitidis serogroup C / serotype 2a (strain ATCC 700532 / DSM 15464 / FAM18).